A 655-amino-acid polypeptide reads, in one-letter code: DNA mismatch repair protein MutL (655 aa).

Disordered regions lie at residues 357 to 416 and 439 to 460; these read EKKQ…DDYT and DFDS…SKDP. Over residues 371 to 383 the composition is skewed to basic and acidic residues; the sequence is SHEEDEKNDDKAY. Positions 402–416 are enriched in polar residues; that stretch reads NTSVSTSPNSDDDYT.

The protein belongs to the DNA mismatch repair MutL/HexB family.

Functionally, this protein is involved in the repair of mismatches in DNA. It is required for dam-dependent methyl-directed DNA mismatch repair. May act as a 'molecular matchmaker', a protein that promotes the formation of a stable complex between two or more DNA-binding proteins in an ATP-dependent manner without itself being part of a final effector complex. The chain is DNA mismatch repair protein MutL from Staphylococcus saprophyticus subsp. saprophyticus (strain ATCC 15305 / DSM 20229 / NCIMB 8711 / NCTC 7292 / S-41).